The sequence spans 395 residues: Putative transcription factor 079L (395 aa).

The protein belongs to the IIV-6 282R family.

Transcription activation. This Aedes vexans (Inland floodwater mosquito) protein is Putative transcription factor 079L.